A 78-amino-acid chain; its full sequence is Large ribosomal subunit protein uL29 (78 aa).

Belongs to the universal ribosomal protein uL29 family.

This is Large ribosomal subunit protein uL29 from Crocosphaera subtropica (strain ATCC 51142 / BH68) (Cyanothece sp. (strain ATCC 51142)).